The sequence spans 119 residues: Integration host factor subunit alpha (119 aa).

The disordered stretch occupies residues 96–119; that stretch reads INGQQGSGKMNGEASHEQLSAEPE.

The protein belongs to the bacterial histone-like protein family. Heterodimer of an alpha and a beta chain.

Functionally, this protein is one of the two subunits of integration host factor, a specific DNA-binding protein that functions in genetic recombination as well as in transcriptional and translational control. In Bradyrhizobium sp. (strain BTAi1 / ATCC BAA-1182), this protein is Integration host factor subunit alpha.